Reading from the N-terminus, the 174-residue chain is MSKETLKANLREIPDFPIPGILFYDVTTLFKNPECLQEILDTLYEMYKDKGITKVVGIESRGFIMGGALAARLGAGFVMARKPGKLPAEVVEETYAKEYGTDTIQIHKDAIDENDVVLLHDDLLATGGTMAATHRLVQRCGAKKIFINFIIELGGLNGRKAFPEDITVDTLLTL.

This sequence belongs to the purine/pyrimidine phosphoribosyltransferase family. In terms of assembly, homodimer.

It localises to the cytoplasm. It carries out the reaction AMP + diphosphate = 5-phospho-alpha-D-ribose 1-diphosphate + adenine. Its pathway is purine metabolism; AMP biosynthesis via salvage pathway; AMP from adenine: step 1/1. In terms of biological role, catalyzes a salvage reaction resulting in the formation of AMP, that is energically less costly than de novo synthesis. The protein is Adenine phosphoribosyltransferase of Phocaeicola vulgatus (strain ATCC 8482 / DSM 1447 / JCM 5826 / CCUG 4940 / NBRC 14291 / NCTC 11154) (Bacteroides vulgatus).